The following is a 251-amino-acid chain: Triosephosphate isomerase (251 aa).

Residue 9–11 (NWK) participates in substrate binding. His-95 functions as the Electrophile in the catalytic mechanism. Catalysis depends on Glu-167, which acts as the Proton acceptor. Residues Gly-173, Ser-212, and 233-234 (GG) contribute to the substrate site.

The protein belongs to the triosephosphate isomerase family. As to quaternary structure, homodimer.

The protein localises to the cytoplasm. It carries out the reaction D-glyceraldehyde 3-phosphate = dihydroxyacetone phosphate. The protein operates within carbohydrate biosynthesis; gluconeogenesis. It functions in the pathway carbohydrate degradation; glycolysis; D-glyceraldehyde 3-phosphate from glycerone phosphate: step 1/1. In terms of biological role, involved in the gluconeogenesis. Catalyzes stereospecifically the conversion of dihydroxyacetone phosphate (DHAP) to D-glyceraldehyde-3-phosphate (G3P). This Pseudomonas putida (strain ATCC 700007 / DSM 6899 / JCM 31910 / BCRC 17059 / LMG 24140 / F1) protein is Triosephosphate isomerase.